We begin with the raw amino-acid sequence, 437 residues long: Adenylosuccinate synthetase, organellar chromatophore (437 aa).

GTP-binding positions include 12-18 and 40-42; these read GDEGKGK and GHT. Residue D13 is the Proton acceptor of the active site. Mg(2+) is bound by residues D13 and G40. Residues 13-16, 38-41, T128, R142, Q223, T238, and R302 each bind IMP; these read DEGK and NAGH. H41 serves as the catalytic Proton donor. Residue 298–304 coordinates substrate; that stretch reads TTTGRRR. GTP contacts are provided by residues R304 and 330-332; that span reads KLD.

This sequence belongs to the adenylosuccinate synthetase family. As to quaternary structure, homodimer. Mg(2+) serves as cofactor.

It is found in the plastid. Its subcellular location is the organellar chromatophore. It carries out the reaction IMP + L-aspartate + GTP = N(6)-(1,2-dicarboxyethyl)-AMP + GDP + phosphate + 2 H(+). The protein operates within purine metabolism; AMP biosynthesis via de novo pathway; AMP from IMP: step 1/2. In terms of biological role, plays an important role in the de novo pathway and in the salvage pathway of purine nucleotide biosynthesis. Catalyzes the first committed step in the biosynthesis of AMP from IMP. The sequence is that of Adenylosuccinate synthetase, organellar chromatophore from Paulinella chromatophora.